Here is a 197-residue protein sequence, read N- to C-terminus: MTVVPIRIVGDPVLHTATTPVTVAADGSLPADLAQLIATMYDTMDAANGVGLAANQIGCSLRLFVYDCAADRAMTARRRGVVINPVLETSEIPETMPDPDTDDEGCLSVPGESFPTGRAKWARVTGLDADGSPVSIEGTGLFARMLQHETGHLDGFLYLDRLIGRYARNAKRAVKSHGWGVPGLSWLPGEDPDPFGH.

2 residues coordinate Fe cation: Cys106 and His148. Glu149 is an active-site residue. Residue His152 participates in Fe cation binding.

It belongs to the polypeptide deformylase family. Requires Fe(2+) as cofactor.

The catalysed reaction is N-terminal N-formyl-L-methionyl-[peptide] + H2O = N-terminal L-methionyl-[peptide] + formate. Its function is as follows. Removes the formyl group from the N-terminal Met of newly synthesized proteins. Requires at least a dipeptide for an efficient rate of reaction. N-terminal L-methionine is a prerequisite for activity but the enzyme has broad specificity at other positions. This is Peptide deformylase from Mycobacterium bovis (strain ATCC BAA-935 / AF2122/97).